Here is a 249-residue protein sequence, read N- to C-terminus: DNA repair protein RecO (249 aa).

Belongs to the RecO family.

In terms of biological role, involved in DNA repair and RecF pathway recombination. This chain is DNA repair protein RecO, found in Solidesulfovibrio magneticus (strain ATCC 700980 / DSM 13731 / RS-1) (Desulfovibrio magneticus).